An 863-amino-acid chain; its full sequence is Leucine--tRNA ligase (863 aa).

Residues 42–52 (PYPSGRLHMGH) carry the 'HIGH' region motif. Positions 622–626 (KMSKS) match the 'KMSKS' region motif. Position 625 (lysine 625) interacts with ATP.

It belongs to the class-I aminoacyl-tRNA synthetase family.

Its subcellular location is the cytoplasm. The enzyme catalyses tRNA(Leu) + L-leucine + ATP = L-leucyl-tRNA(Leu) + AMP + diphosphate. The protein is Leucine--tRNA ligase of Shewanella loihica (strain ATCC BAA-1088 / PV-4).